We begin with the raw amino-acid sequence, 296 residues long: Cytidine deaminase (296 aa).

2 consecutive CMP/dCMP-type deaminase domains span residues 47–167 (AESE…FGPS) and 186–296 (DSSD…LDPE). Residue 88–90 (NME) coordinates substrate. Position 101 (His-101) interacts with Zn(2+). Glu-103 (proton donor) is an active-site residue. The Zn(2+) site is built by Cys-128 and Cys-131.

It belongs to the cytidine and deoxycytidylate deaminase family. As to quaternary structure, homodimer. Zn(2+) serves as cofactor.

It carries out the reaction cytidine + H2O + H(+) = uridine + NH4(+). The catalysed reaction is 2'-deoxycytidine + H2O + H(+) = 2'-deoxyuridine + NH4(+). Its function is as follows. This enzyme scavenges exogenous and endogenous cytidine and 2'-deoxycytidine for UMP synthesis. This is Cytidine deaminase from Shewanella sediminis (strain HAW-EB3).